An 88-amino-acid polypeptide reads, in one-letter code: Small ribosomal subunit protein uS15 (88 aa).

The protein belongs to the universal ribosomal protein uS15 family. Part of the 30S ribosomal subunit. Forms a bridge to the 50S subunit in the 70S ribosome, contacting the 23S rRNA.

One of the primary rRNA binding proteins, it binds directly to 16S rRNA where it helps nucleate assembly of the platform of the 30S subunit by binding and bridging several RNA helices of the 16S rRNA. Its function is as follows. Forms an intersubunit bridge (bridge B4) with the 23S rRNA of the 50S subunit in the ribosome. The protein is Small ribosomal subunit protein uS15 of Acidobacterium capsulatum (strain ATCC 51196 / DSM 11244 / BCRC 80197 / JCM 7670 / NBRC 15755 / NCIMB 13165 / 161).